The chain runs to 130 residues: Histone H2B.1 (130 aa).

Over residues methionine 1–proline 19 the composition is skewed to basic and acidic residues. A disordered region spans residues methionine 1–glutamate 39. Lysine 7 and lysine 8 each carry N6-acetyllysine; alternate. Glycyl lysine isopeptide (Lys-Gly) (interchain with G-Cter in SUMO); alternate cross-links involve residues lysine 7 and lysine 8. The residue at position 11 (serine 11) is a Phosphoserine. An N6-acetyllysine modification is found at lysine 12. N6-acetyllysine; alternate is present on lysine 17. Lysine 17 is covalently cross-linked (Glycyl lysine isopeptide (Lys-Gly) (interchain with G-Cter in SUMO); alternate). Lysine 18 is covalently cross-linked (Glycyl lysine isopeptide (Lys-Gly) (interchain with G-Cter in SUMO)). A Glycyl lysine isopeptide (Lys-Gly) (interchain with G-Cter in ubiquitin) cross-link involves residue lysine 124.

The protein belongs to the histone H2B family. The nucleosome is a histone octamer containing two molecules each of H2A, H2B, H3 and H4 assembled in one H3-H4 heterotetramer and two H2A-H2B heterodimers. The octamer wraps approximately 147 bp of DNA. Monoubiquitinated by the UBC2-BRE1 complex to form H2BK123ub1. H2BK123ub1 gives a specific tag for epigenetic transcriptional activation and is also prerequisite for H3K4me and H3K79me formation. H2BK123ub1 also modulates the formation of double-strand breaks during meiosis and is a prerequisite for DNA-damage checkpoint activation. In terms of processing, phosphorylated by STE20 to form H2BS10ph during progression through meiotic prophase. May be correlated with chromosome condensation. Post-translationally, acetylated by GCN5 to form H2BK11ac and H2BK16ac. H2BK16ac can also be formed by ESA1. Acetylation of N-terminal lysines and particularly formation of H2BK11acK16ac has a positive effect on transcription. Sumoylation to form H2BK6su or H2BK7su, and probably also H2BK16su or H2BK17su, occurs preferentially near the telomeres and represses gene transcription.

It is found in the nucleus. The protein localises to the chromosome. In terms of biological role, core component of nucleosome. Nucleosomes wrap and compact DNA into chromatin, limiting DNA accessibility to the cellular machineries which require DNA as a template. Histones thereby play a central role in transcription regulation, DNA repair, DNA replication and chromosomal stability. DNA accessibility is regulated via a complex set of post-translational modifications of histones, also called histone code, and nucleosome remodeling. This is Histone H2B.1 (HTB1) from Debaryomyces hansenii (strain ATCC 36239 / CBS 767 / BCRC 21394 / JCM 1990 / NBRC 0083 / IGC 2968) (Yeast).